Consider the following 440-residue polypeptide: Adenylosuccinate synthetase (440 aa).

Residues 14-20 and 42-44 contribute to the GTP site; these read GDEGKGK and GHT. The active-site Proton acceptor is the aspartate 15. 2 residues coordinate Mg(2+): aspartate 15 and glycine 42. Residues 15–18, 40–43, threonine 131, arginine 145, glutamine 226, threonine 241, and arginine 313 contribute to the IMP site; these read DEGK and NAGH. Histidine 43 serves as the catalytic Proton donor. 309–315 serves as a coordination point for substrate; that stretch reads ATTGRQR. Residues arginine 315, 341-343, and 423-425 each bind GTP; these read KLD and STG.

The protein belongs to the adenylosuccinate synthetase family. In terms of assembly, homodimer. The cofactor is Mg(2+).

The protein resides in the cytoplasm. It carries out the reaction IMP + L-aspartate + GTP = N(6)-(1,2-dicarboxyethyl)-AMP + GDP + phosphate + 2 H(+). It participates in purine metabolism; AMP biosynthesis via de novo pathway; AMP from IMP: step 1/2. In terms of biological role, plays an important role in the de novo pathway of purine nucleotide biosynthesis. Catalyzes the first committed step in the biosynthesis of AMP from IMP. The chain is Adenylosuccinate synthetase from Hydrogenovibrio crunogenus (strain DSM 25203 / XCL-2) (Thiomicrospira crunogena).